The chain runs to 623 residues: V-type proton ATPase catalytic subunit A (623 aa).

Residue 252–259 (GAFGCGKT) coordinates ATP.

Belongs to the ATPase alpha/beta chains family. In terms of assembly, V-ATPase is a heteromultimeric enzyme composed of a peripheral catalytic V1 complex (main components: subunits A, B, C, D, E, and F) attached to an integral membrane V0 proton pore complex (main component: the proteolipid protein).

It catalyses the reaction ATP + H2O + 4 H(+)(in) = ADP + phosphate + 5 H(+)(out). Functionally, catalytic subunit of the peripheral V1 complex of vacuolar ATPase. V-ATPase vacuolar ATPase is responsible for acidifying a variety of intracellular compartments in eukaryotic cells. The sequence is that of V-type proton ATPase catalytic subunit A from Citrus unshiu (Satsuma mandarin).